We begin with the raw amino-acid sequence, 206 residues long: Small ribosomal subunit protein uS4 (206 aa).

Residues 96-156 (GRLDNVVYRM…EKAKKQSRVK (61 aa)) enclose the S4 RNA-binding domain.

This sequence belongs to the universal ribosomal protein uS4 family. Part of the 30S ribosomal subunit. Contacts protein S5. The interaction surface between S4 and S5 is involved in control of translational fidelity.

Its function is as follows. One of the primary rRNA binding proteins, it binds directly to 16S rRNA where it nucleates assembly of the body of the 30S subunit. With S5 and S12 plays an important role in translational accuracy. The protein is Small ribosomal subunit protein uS4 of Enterobacter sp. (strain 638).